Here is a 379-residue protein sequence, read N- to C-terminus: MTTNQQNAVVSQPQTVVVKLGTSVLTGGTLALNRAHMVELARQCAELKKQGHSVVMVSSGAIAAGREHLGYPALPNEMASKQLLAAVGQSRLIQTWESLFGIYGIKIGQMLLTRADLDDRERFLNARDTINALVANDIIPIVNENDAVATNEIKVGDNDNLSALVGILCGADKLLLLTDQKGLFTADPRKDPNAELIKEVKTIDDTLRKIAGGSGTTLGTGGMATKLQAADIARRAGIEVIIAAGSAPNVIFDSLSSEPQGTRFLPCEEALENRKRWILAGPAASGDIIIDDGAVNAVVGKGSSLLAKGVIKVSGDFARGEVARVTNSHGKLVARGISAYSSEDLAKIAGKHSKDIISILGHDYGSEVIHRDDLVVIQE.

Residue K19 coordinates ATP. Substrate-binding residues include S59, D146, and N158. ATP-binding positions include 178–179 (TD) and 220–226 (TGGMATK). A PUA domain is found at 285-363 (SGDIIIDDGA…KDIISILGHD (79 aa)).

This sequence belongs to the glutamate 5-kinase family.

The protein resides in the cytoplasm. The catalysed reaction is L-glutamate + ATP = L-glutamyl 5-phosphate + ADP. Its pathway is amino-acid biosynthesis; L-proline biosynthesis; L-glutamate 5-semialdehyde from L-glutamate: step 1/2. In terms of biological role, catalyzes the transfer of a phosphate group to glutamate to form L-glutamate 5-phosphate. This Vibrio campbellii (strain ATCC BAA-1116) protein is Glutamate 5-kinase.